The sequence spans 267 residues: Tryptophan synthase alpha chain (267 aa).

Active-site proton acceptor residues include Glu-47 and Asp-58.

This sequence belongs to the TrpA family. In terms of assembly, tetramer of two alpha and two beta chains.

It carries out the reaction (1S,2R)-1-C-(indol-3-yl)glycerol 3-phosphate + L-serine = D-glyceraldehyde 3-phosphate + L-tryptophan + H2O. It participates in amino-acid biosynthesis; L-tryptophan biosynthesis; L-tryptophan from chorismate: step 5/5. The alpha subunit is responsible for the aldol cleavage of indoleglycerol phosphate to indole and glyceraldehyde 3-phosphate. This Pelodictyon phaeoclathratiforme (strain DSM 5477 / BU-1) protein is Tryptophan synthase alpha chain.